The chain runs to 651 residues: DNA mismatch repair protein MutL (651 aa).

The tract at residues 383–405 (TAAEEPTPAPTSPDLEIGDLDDQ) is disordered.

The protein belongs to the DNA mismatch repair MutL/HexB family.

Functionally, this protein is involved in the repair of mismatches in DNA. It is required for dam-dependent methyl-directed DNA mismatch repair. May act as a 'molecular matchmaker', a protein that promotes the formation of a stable complex between two or more DNA-binding proteins in an ATP-dependent manner without itself being part of a final effector complex. The sequence is that of DNA mismatch repair protein MutL from Lacticaseibacillus paracasei (strain ATCC 334 / BCRC 17002 / CCUG 31169 / CIP 107868 / KCTC 3260 / NRRL B-441) (Lactobacillus paracasei).